Reading from the N-terminus, the 126-residue chain is Small ribosomal subunit protein uS12 (126 aa).

3-methylthioaspartic acid is present on aspartate 89. The segment at glycine 106–alanine 126 is disordered.

It belongs to the universal ribosomal protein uS12 family. In terms of assembly, part of the 30S ribosomal subunit. Contacts proteins S8 and S17. May interact with IF1 in the 30S initiation complex.

Its function is as follows. With S4 and S5 plays an important role in translational accuracy. Interacts with and stabilizes bases of the 16S rRNA that are involved in tRNA selection in the A site and with the mRNA backbone. Located at the interface of the 30S and 50S subunits, it traverses the body of the 30S subunit contacting proteins on the other side and probably holding the rRNA structure together. The combined cluster of proteins S8, S12 and S17 appears to hold together the shoulder and platform of the 30S subunit. The polypeptide is Small ribosomal subunit protein uS12 (Tremblaya princeps).